A 223-amino-acid chain; its full sequence is Killer cell lectin-like receptor subfamily B member 1A (223 aa).

The Cytoplasmic segment spans residues 1–43 (MDTARVYLSLKPSKTAAGAQCVSPPSLPPDACRCPRSHRLALK). The LCK-binding motif signature appears at 32 to 35 (CRCP). Residues 44 to 63 (LSCAGLILLVLALVGMSILV) form a helical; Signal-anchor for type II membrane protein membrane-spanning segment. At 64–223 (RVLVQKPSVE…LKCECMCNDS (160 aa)) the chain is on the extracellular side. The 120-residue stretch at 93 to 212 (KCPKDWLSHR…DSDNIWVCQK (120 aa)) folds into the C-type lectin domain. 3 disulfides stabilise this stretch: Cys94-Cys105, Cys122-Cys210, and Cys189-Cys202.

As to quaternary structure, homodimer; disulfide-linked. Interacts with tyrosine kinase LCK. Expressed in natural killer cells.

It localises to the membrane. Plays a stimulatory role on natural killer (NK) cell cytotoxicity. This Rattus norvegicus (Rat) protein is Killer cell lectin-like receptor subfamily B member 1A (Klrb1a).